We begin with the raw amino-acid sequence, 759 residues long: uncharacterized protein (759 aa).

This is an uncharacterized protein from Escherichia coli (strain K12).